The chain runs to 461 residues: Ribulose bisphosphate carboxylase (461 aa).

Asparagine 113 lines the substrate pocket. Residue lysine 168 is the Proton acceptor of the active site. Position 170 (lysine 170) interacts with substrate. Lysine 193, aspartate 195, and glutamate 196 together coordinate Mg(2+). At lysine 193 the chain carries N6-carboxylysine. The active-site Proton acceptor is the histidine 289. Positions 290, 323, and 370 each coordinate substrate.

It belongs to the RuBisCO large chain family. Type II subfamily. Homodimer. Requires Mg(2+) as cofactor.

The enzyme catalyses 2 (2R)-3-phosphoglycerate + 2 H(+) = D-ribulose 1,5-bisphosphate + CO2 + H2O. The catalysed reaction is D-ribulose 1,5-bisphosphate + O2 = 2-phosphoglycolate + (2R)-3-phosphoglycerate + 2 H(+). In terms of biological role, ruBisCO catalyzes two reactions: the carboxylation of D-ribulose 1,5-bisphosphate, the primary event in carbon dioxide fixation, as well as the oxidative fragmentation of the pentose substrate. Both reactions occur simultaneously and in competition at the same active site. This Thiomonas intermedia (strain K12) (Thiobacillus intermedius) protein is Ribulose bisphosphate carboxylase.